The primary structure comprises 556 residues: Dihydroxy-acid dehydratase (556 aa).

Aspartate 78 is a binding site for Mg(2+). Residue cysteine 119 coordinates [2Fe-2S] cluster. Positions 120 and 121 each coordinate Mg(2+). Position 121 is an N6-carboxylysine (lysine 121). Cysteine 191 contributes to the [2Fe-2S] cluster binding site. Residue glutamate 442 coordinates Mg(2+). Serine 468 functions as the Proton acceptor in the catalytic mechanism.

The protein belongs to the IlvD/Edd family. In terms of assembly, homodimer. Requires [2Fe-2S] cluster as cofactor. It depends on Mg(2+) as a cofactor.

It carries out the reaction (2R)-2,3-dihydroxy-3-methylbutanoate = 3-methyl-2-oxobutanoate + H2O. The catalysed reaction is (2R,3R)-2,3-dihydroxy-3-methylpentanoate = (S)-3-methyl-2-oxopentanoate + H2O. It functions in the pathway amino-acid biosynthesis; L-isoleucine biosynthesis; L-isoleucine from 2-oxobutanoate: step 3/4. The protein operates within amino-acid biosynthesis; L-valine biosynthesis; L-valine from pyruvate: step 3/4. In terms of biological role, functions in the biosynthesis of branched-chain amino acids. Catalyzes the dehydration of (2R,3R)-2,3-dihydroxy-3-methylpentanoate (2,3-dihydroxy-3-methylvalerate) into 2-oxo-3-methylpentanoate (2-oxo-3-methylvalerate) and of (2R)-2,3-dihydroxy-3-methylbutanoate (2,3-dihydroxyisovalerate) into 2-oxo-3-methylbutanoate (2-oxoisovalerate), the penultimate precursor to L-isoleucine and L-valine, respectively. The chain is Dihydroxy-acid dehydratase from Caldanaerobacter subterraneus subsp. tengcongensis (strain DSM 15242 / JCM 11007 / NBRC 100824 / MB4) (Thermoanaerobacter tengcongensis).